Reading from the N-terminus, the 879-residue chain is Metabotropic glutamate receptor 3 (879 aa).

The N-terminal stretch at 1–22 (MKMLTRLQVLTLALFSKGFLLS) is a signal peptide. Residues 23-576 (LGDHNFLRRE…EDYIRWEDAW (554 aa)) lie on the Extracellular side of the membrane. C57 and C99 form a disulfide bridge. L-glutamate is bound by residues S151 and 172–174 (AST). A glycan (N-linked (GlcNAc...) asparagine) is linked at N209. An L-glutamate-binding site is contributed by Y222. 7 disulfides stabilise this stretch: C240/C527, C361/C373, C412/C419, C509/C528, C513/C531, C534/C546, and C549/C562. Residue N292 is glycosylated (N-linked (GlcNAc...) asparagine). D301 contributes to the L-glutamate binding site. K389 serves as a coordination point for L-glutamate. N-linked (GlcNAc...) asparagine glycosylation is found at N414 and N439. Residues 577-599 (VIGPVTIACLGFMCTCMVVTVFI) form a helical membrane-spanning segment. The Cytoplasmic segment spans residues 600–613 (KHNNTPLVKASGRE). Residues 614–634 (LCYILLFGVGLSYCMTFFFIA) traverse the membrane as a helical segment. The Extracellular portion of the chain corresponds to 635-645 (KPSPVICALRR). The chain crosses the membrane as a helical span at residues 646-664 (LGLGSSFAICYSALLTKTN). The Cytoplasmic segment spans residues 665-688 (CIARIFDGVKNGAQRPKFISPSSQ). The helical transmembrane segment at 689-709 (VFICLGLILVQIVMVSVWLIL) threads the bilayer. At 710-734 (EAPGTRRYTLAEKRETVILKCNVKD) the chain is on the extracellular side. The chain crosses the membrane as a helical span at residues 735–756 (SSMLISLTYDVILVILCTVYAF). Residues 757-769 (KTRKCPENFNEAK) lie on the Cytoplasmic side of the membrane. Residues 770–792 (FIGFTMYTTCIIWLAFLPIFYVT) traverse the membrane as a helical segment. Over 793–802 (SSDYRVQTTT) the chain is Extracellular. A helical transmembrane segment spans residues 803–828 (MCISVSLSGFVVLGCLFAPKVHIILF). The Cytoplasmic portion of the chain corresponds to 829–879 (QPQKNVVTHRLHLNRFSVSGTGTTYSQSSASTYVPTVCNGREVLDSTTSSL).

Belongs to the G-protein coupled receptor 3 family. Interacts with TAMALIN.

It is found in the cell membrane. G-protein coupled receptor for glutamate. Ligand binding causes a conformation change that triggers signaling via guanine nucleotide-binding proteins (G proteins) and modulates the activity of down-stream effectors. Signaling inhibits adenylate cyclase activity. This is Metabotropic glutamate receptor 3 (GRM3) from Pongo abelii (Sumatran orangutan).